The following is a 102-amino-acid chain: Large ribosomal subunit protein uL23 (102 aa).

It belongs to the universal ribosomal protein uL23 family. In terms of assembly, part of the 50S ribosomal subunit. Contacts protein L29, and trigger factor when it is bound to the ribosome.

Its function is as follows. One of the early assembly proteins it binds 23S rRNA. One of the proteins that surrounds the polypeptide exit tunnel on the outside of the ribosome. Forms the main docking site for trigger factor binding to the ribosome. The chain is Large ribosomal subunit protein uL23 from Methylobacillus flagellatus (strain ATCC 51484 / DSM 6875 / VKM B-1610 / KT).